The following is a 150-amino-acid chain: Large ribosomal subunit protein bL9 (150 aa).

The protein belongs to the bacterial ribosomal protein bL9 family.

Functionally, binds to the 23S rRNA. The polypeptide is Large ribosomal subunit protein bL9 (Moorella thermoacetica (strain ATCC 39073 / JCM 9320)).